The chain runs to 119 residues: Large ribosomal subunit protein bL20 (119 aa).

The protein belongs to the bacterial ribosomal protein bL20 family.

Its function is as follows. Binds directly to 23S ribosomal RNA and is necessary for the in vitro assembly process of the 50S ribosomal subunit. It is not involved in the protein synthesizing functions of that subunit. The chain is Large ribosomal subunit protein bL20 from Shewanella frigidimarina (strain NCIMB 400).